A 940-amino-acid polypeptide reads, in one-letter code: MEQMSVTQFAGELKMPAAALLEQLKRAGVDKSSAADLLTEQDKSRLLEYLRRAHGGGEPKGKITLTRKQTTEIRATDSTGRARTVQVEVRKKRTFVKRDELLGDAASAESPLLEEELSVAGEAAGEAVAAPEPVLEAAPVEVVAEPEPVQPEPLPEPEPEPVVVEEAPVQQAAEPEPVEAAAVAAEAESPESAQPAAPRARPVSITELLSEEEIAAREREARRHRELVERQQADLRARQQREAAAKAAAEARRLDEEAKARAEQQKKEEAAKPAAKPAPGPTGTLHRPAKADDKAGKDAKRGPAREADGAKRRGIKTRGEVGGAASGNAWRGAKGGGRHGRQQDDRQTFQAPTEPIVREVHVPETITVADLAHKMSVKATEVIKTLMKMGSMVTINQVLDQETAMIVVEELGHKALAAKLDDPDAFLEETDAHKDAELLPRAPVVTVMGHVDHGKTSLLDYIRRAKVAAGEAGGITQHIGAYHVETPRGVITFLDTPGHEAFTAMRARGAKATDIVILVCAADDGVMPQTREAIHHAKAAGVPVVVAITKIDKPEANAERVKQELVSESVIPEEYGGDTMFVPVSAKTGTGVDELLEAVLLQAEVLELTAAVDAPAKGLIVEARLDKGRGPVASLLVQSGTLRKGDVLLVGATFGRIRAMLDENGKPVDEAGPSIPVEILGLSDVPAAGDEAIVLGDEKKAREIALFRQGKFRDVKLAKQQAAKLESMFEQMAEGEVKSLPLIIKADVQGSQEALAQSLAKLSNDEVRVNVIHGAVGAISESDVNLAQASGAVIIGFNTRADAGARKLAESFGVDIRYYNIIYDAVDEVKSALSGMLAPEKREEVIGMVEIRQVFTISKVGSVAGCYVLEGLVKRGSSVRLIRNHTVVWTGELESLKRFKDDVKEVKFGYECGLQLKNYNDIQVGDQLEVFEIKEVARTL.

Composition is skewed to low complexity over residues 138–147 and 161–208; these read APVEVVAEPE and PVVV…ITEL. A disordered region spans residues 138–354; sequence APVEVVAEPE…DRQTFQAPTE (217 aa). Composition is skewed to basic and acidic residues over residues 214-271 and 289-311; these read IAAR…EEAA and AKAD…DGAK. The tr-type G domain maps to 440 to 609; the sequence is PRAPVVTVMG…LLQAEVLELT (170 aa). The segment at 449–456 is G1; it reads GHVDHGKT. 449 to 456 is a binding site for GTP; sequence GHVDHGKT. The tract at residues 474–478 is G2; that stretch reads GITQH. The G3 stretch occupies residues 495-498; that stretch reads DTPG. GTP contacts are provided by residues 495 to 499 and 549 to 552; these read DTPGH and TKID. The tract at residues 549–552 is G4; that stretch reads TKID. A G5 region spans residues 585–587; sequence SAK.

Belongs to the TRAFAC class translation factor GTPase superfamily. Classic translation factor GTPase family. IF-2 subfamily.

The protein localises to the cytoplasm. One of the essential components for the initiation of protein synthesis. Protects formylmethionyl-tRNA from spontaneous hydrolysis and promotes its binding to the 30S ribosomal subunits. Also involved in the hydrolysis of GTP during the formation of the 70S ribosomal complex. This Azoarcus sp. (strain BH72) protein is Translation initiation factor IF-2.